Consider the following 213-residue polypeptide: RxLR effector protein PexRD1 (213 aa).

The N-terminal stretch at 1–19 is a signal peptide; the sequence is MRACNTLLPTAIVLTSCDA. The RxLR-dEER signature appears at 50–77; it reads RQLRGFYATENTDPVNNQDTAHEDGEER.

The protein belongs to the RxLR effector family.

Its subcellular location is the secreted. The protein localises to the host nucleus. Its function is as follows. Effector that enhances P.infestans colonization of Nicotiana benthamiana leaves. The sequence is that of RxLR effector protein PexRD1 from Phytophthora infestans (strain T30-4) (Potato late blight agent).